The following is a 172-amino-acid chain: Envelope protein UL45 (172 aa).

At 1–27 the chain is on the intravirion side; sequence MPLRASEHAYRPLGPGTPPMRARLPAA. A helical; Signal-anchor for type II membrane protein membrane pass occupies residues 28-48; sequence AWVGVGTIIGGVVIIAALVLV. The Virion surface segment spans residues 49 to 172; that stretch reads PSRASWALSP…TSTRNALGLP (124 aa).

This sequence belongs to the herpesviridae HHV-1 UL45 family.

The protein localises to the virion membrane. Important virulence factor of HSV neurotropism. Seems to be required for glycoprotein B-induced fusion. Dispensable for growth in vitro. This chain is Envelope protein UL45, found in Human herpesvirus 1 (strain 17) (HHV-1).